The chain runs to 363 residues: NAD(P)H-quinone oxidoreductase subunit 1, chloroplastic (363 aa).

The next 8 membrane-spanning stretches (helical) occupy residues 30-50, 98-118, 127-147, 165-185, 203-223, 248-268, 300-320, and 336-356; these read LFPIFTLVLGITIGVLVIVWL, FSIGPSIAVISIFLSYSVIPF, LSIGVFFWIAISSIAPVGLLM, AAQSISYEIPLALCVLSISLL, FWGWNLWRQPIGFIVFLISSL, YSGIKFGLFYIASYLNLLVSS, VFGTLIGIFITLAKTYLFLFI, and LLNLGWKFLLPISLGNLLLTT.

The protein belongs to the complex I subunit 1 family. In terms of assembly, NDH is composed of at least 16 different subunits, 5 of which are encoded in the nucleus.

The protein resides in the plastid. Its subcellular location is the chloroplast thylakoid membrane. The enzyme catalyses a plastoquinone + NADH + (n+1) H(+)(in) = a plastoquinol + NAD(+) + n H(+)(out). It catalyses the reaction a plastoquinone + NADPH + (n+1) H(+)(in) = a plastoquinol + NADP(+) + n H(+)(out). Functionally, NDH shuttles electrons from NAD(P)H:plastoquinone, via FMN and iron-sulfur (Fe-S) centers, to quinones in the photosynthetic chain and possibly in a chloroplast respiratory chain. The immediate electron acceptor for the enzyme in this species is believed to be plastoquinone. Couples the redox reaction to proton translocation, and thus conserves the redox energy in a proton gradient. This Nicotiana tomentosiformis (Tobacco) protein is NAD(P)H-quinone oxidoreductase subunit 1, chloroplastic.